A 241-amino-acid polypeptide reads, in one-letter code: Phosphoribosylaminoimidazole-succinocarboxamide synthase (241 aa).

It belongs to the SAICAR synthetase family.

The enzyme catalyses 5-amino-1-(5-phospho-D-ribosyl)imidazole-4-carboxylate + L-aspartate + ATP = (2S)-2-[5-amino-1-(5-phospho-beta-D-ribosyl)imidazole-4-carboxamido]succinate + ADP + phosphate + 2 H(+). Its pathway is purine metabolism; IMP biosynthesis via de novo pathway; 5-amino-1-(5-phospho-D-ribosyl)imidazole-4-carboxamide from 5-amino-1-(5-phospho-D-ribosyl)imidazole-4-carboxylate: step 1/2. The polypeptide is Phosphoribosylaminoimidazole-succinocarboxamide synthase (purC) (Bacillus subtilis (strain 168)).